Consider the following 3343-residue polypeptide: Breast cancer type 2 susceptibility protein homolog (3343 aa).

Positions 1-40 are interaction with PALB2; the sequence is MTVEYKRRPTFWEIFKARCSTADLGPISLNWFEELFSEAP. A disordered region spans residues 40–60; sequence PPYNTEHPEESEYKPQGHEPQ. A compositionally biased stretch (basic and acidic residues) spans 45-56; sequence EHPEESEYKPQG. Phosphoserine is present on Ser-70. The disordered stretch occupies residues 348–381; sequence IEPRDSEPLDPSVTNQKPLYSQSGDISSEAGQCS. The span at 359-381 shows a compositional bias: polar residues; that stretch reads SVTNQKPLYSQSGDISSEAGQCS. A phosphoserine mark is found at Ser-475 and Ser-736. Positions 622–982 are interaction with NPM1; that stretch reads PDSSIKRSNL…DKWSEFLDPL (361 aa). BRCA2 repeat units follow at residues 984–1018, 1197–1231, 1405–1439, 1503–1537, 1645–1669, 1828–1845, 1939–1973, and 2019–2053; these read NHKL…DIEE, KEME…DIEN, MKEF…QETE, KEPT…ETQY, CYTG…WLRE, FITT…IFTD, PSRT…EIDG, and SSFV…EFDL. Residues 985–2050 form an interaction with RAD51 region; that stretch reads HKLGGSFRTA…LHKVKGMLEE (1066 aa). Disordered regions lie at residues 2059–2138, 2297–2356, and 2377–2407; these read TLQH…VLGT, PFCS…SDKS, and DSKN…PQFN. Ser-2063 carries the post-translational modification Phosphoserine. Polar residues-rich tracts occupy residues 2083 to 2094 and 2101 to 2125; these read PEYSVSSKLQKT and SPSN…QLSQ. Residues 2233–2300 form an interaction with HSF2BP region; it reads RKRGGMAGVA…EPVTCGPFCS (68 aa). Composition is skewed to polar residues over residues 2307–2320 and 2332–2342; these read TQSP…QGLQ and GKSSSNPTVSA. The interval 2313-2475 is interaction with FANCD2; it reads TSPAQGLQSK…SPKQLYMYGV (163 aa). Positions 2344–2356 are enriched in basic and acidic residues; it reads RSERTRHSVSDKS. Residues 2411-2762 form an interaction with SEM1 region; sequence MSSLQNARDL…QRVYPLQWVE (352 aa). Positions 2612–2628 match the Nuclear export signal; masked by interaction with SEM1 motif; sequence AAKTLVLCVSDIISLST. The interval 3114–3163 is disordered; sequence DSPKWSTPNKDPTREPYPASTCSASDLASGGQLPRSSPTDQQSYRSPLSC. The segment covering 3147–3163 has biased composition (polar residues); the sequence is PRSSPTDQQSYRSPLSC. At Ser-3222 the chain carries Phosphoserine; by CDK1 and CDK2. 2 disordered regions span residues 3231–3255 and 3289–3343; these read PPRS…WSRA and VGGS…PDYS. Ser-3250 bears the Phosphoserine mark. Over residues 3295–3310 the composition is skewed to polar residues; the sequence is VFPSDSTRTEGPSAST. Over residues 3318–3334 the composition is skewed to basic and acidic residues; sequence SKRESLRDCRDDSDGKL.

Monomer and dimer. Interacts with RAD51; regulates RAD51 recruitment and function at sites of DNA repair. Interacts with SEM1, WDR16, USP11, DMC1, ROCK2 and NPM1. Interacts with both nonubiquitinated and monoubiquitinated FANCD2; this complex also includes XRCC3 and phosphorylated FANCG. Part of a BRCA complex containing BRCA1, BRCA2 and PALB2. Component of the homologous recombination repair (HR) complex composed of ERCC5/XPG, BRCA2, PALB2, DSS1 and RAD51. Within the complex, interacts with ERCC5/XPG and PALB2. Interacts directly with PALB2 which may serve as a scaffold for a HR complex containing PALB2, BRCA2, RAD51C, RAD51 and XRCC3. Interacts with BRCA1 only in the presence of PALB2 which serves as the bridging protein. Interacts with POLH; the interaction is direct. Interacts with the TREX-2 complex subunits PCID2 and SEM1. Interacts with HSF2BP and BRME1; the interaction with HSF2BP is direct and allows the formation of a ternary complex. The complex BRME1:HSF2BP:BRCA2 interacts with SPATA22, MEIOB and RAD51. In terms of processing, phosphorylated by ATM upon irradiation-induced DNA damage. Phosphorylation by CHEK1 and CHEK2 regulates interaction with RAD51. Phosphorylation at Ser-3222 by CDK1 and CDK2 is low in S phase when recombination is active, but increases as cells progress towards mitosis; this phosphorylation prevents homologous recombination-dependent repair during S phase and G2 by inhibiting RAD51 binding. Ubiquitinated in the absence of DNA damage; this does not lead to proteasomal degradation. In contrast, ubiquitination in response to DNA damage leads to proteasomal degradation. In terms of tissue distribution, highest expression in testis. Also expressed in spleen, skeletal muscle, thymus, mammary gland, heart, ovary, prostate, liver, lung, kidney and brain.

The protein localises to the nucleus. It localises to the cytoplasm. Its subcellular location is the cytoskeleton. The protein resides in the microtubule organizing center. It is found in the centrosome. In terms of biological role, involved in double-strand break repair and/or homologous recombination. Binds RAD51 and potentiates recombinational DNA repair by promoting assembly of RAD51 onto single-stranded DNA (ssDNA). Acts by targeting RAD51 to ssDNA over double-stranded DNA, enabling RAD51 to displace replication protein-A (RPA) from ssDNA and stabilizing RAD51-ssDNA filaments by blocking ATP hydrolysis. Part of a PALB2-scaffolded HR complex containing RAD51C and which is thought to play a role in DNA repair by HR. May participate in S phase checkpoint activation. Binds selectively to ssDNA, and to ssDNA in tailed duplexes and replication fork structures. May play a role in the extension step after strand invasion at replication-dependent DNA double-strand breaks; together with PALB2 is involved in both POLH localization at collapsed replication forks and DNA polymerization activity. In concert with NPM1, regulates centrosome duplication. Interacts with the TREX-2 complex (transcription and export complex 2) subunits PCID2 and SEM1, and is required to prevent R-loop-associated DNA damage and thus transcription-associated genomic instability, independently of its known role in homologous recombination. The polypeptide is Breast cancer type 2 susceptibility protein homolog (Rattus norvegicus (Rat)).